The sequence spans 597 residues: NADPH-dependent diflavin oxidoreductase 1 (597 aa).

Residues 6-150 (LLVLFGSQTG…AIDPWLQDLW (145 aa)) form the Flavodoxin-like domain. FMN contacts are provided by residues 12–17 (SQTGTA), 59–62 (ATTG), 97–106 (LGDSSYAKFN), and aspartate 132. One can recognise an FAD-binding FR-type domain in the interval 206–446 (LQPFLAPMVS…WVRSGGLTFP (241 aa)). FAD is bound by residues arginine 350, 382–385 (RAFS), and 416–419 (GLCS). NADP(+) is bound by residues threonine 460, 515 to 516 (SR), 521 to 525 (KVYVQ), and aspartate 558. Position 596 (tryptophan 596) interacts with FAD.

Belongs to the NADPH-dependent diflavin oxidoreductase NDOR1 family. It in the N-terminal section; belongs to the flavodoxin family. The protein in the C-terminal section; belongs to the flavoprotein pyridine nucleotide cytochrome reductase family. As to quaternary structure, interacts with CIAPIN1; as part of the cytosolic iron-sulfur (Fe-S) protein assembly (CIA) machinery. Interacts with DCPS. It depends on FAD as a cofactor. The cofactor is FMN.

It localises to the cytoplasm. Its subcellular location is the perinuclear region. The enzyme catalyses 2 oxidized [2Fe-2S]-[protein] + NADPH = 2 reduced [2Fe-2S]-[protein] + NADP(+) + H(+). Its function is as follows. NADPH-dependent reductase which is a central component of the cytosolic iron-sulfur (Fe-S) protein assembly (CIA) machinery. Transfers electrons from NADPH via its FAD and FMN prosthetic groups to the [2Fe-2S] cluster of CIAPIN1, another key component of the CIA machinery. In turn, this reduced cluster provides electrons for assembly of cytosolic iron-sulfur cluster proteins. It can also reduce the [2Fe-2S] cluster of CISD1 and activate this protein implicated in Fe/S cluster repair. In vitro can fully activate methionine synthase/MTR in the presence of soluble cytochrome b5/CYB5A. This Bos taurus (Bovine) protein is NADPH-dependent diflavin oxidoreductase 1.